A 625-amino-acid chain; its full sequence is BTB/POZ domain-containing protein At5g48130 (625 aa).

Residues 41–105 (ASVHVRVCNK…IYGCPTLIHP (65 aa)) form the BTB domain. The NPH3 domain occupies 217–469 (DTWIKDLTDL…VQALFIQQLN (253 aa)). The span at 494 to 507 (VPSSRPLTSQQSPC) shows a compositional bias: polar residues. The disordered stretch occupies residues 494-513 (VPSSRPLTSQQSPCTDDETG).

The protein belongs to the NPH3 family.

Its pathway is protein modification; protein ubiquitination. Functionally, may act as a substrate-specific adapter of an E3 ubiquitin-protein ligase complex (CUL3-RBX1-BTB) which mediates the ubiquitination and subsequent proteasomal degradation of target proteins. In Arabidopsis thaliana (Mouse-ear cress), this protein is BTB/POZ domain-containing protein At5g48130.